A 282-amino-acid polypeptide reads, in one-letter code: UPF0759 protein YunF (282 aa).

This sequence belongs to the UPF0759 family.

In Bacillus subtilis (strain 168), this protein is UPF0759 protein YunF (yunF).